Consider the following 229-residue polypeptide: Large ribosomal subunit protein uL1 (229 aa).

It belongs to the universal ribosomal protein uL1 family. Part of the 50S ribosomal subunit.

Functionally, binds directly to 23S rRNA. The L1 stalk is quite mobile in the ribosome, and is involved in E site tRNA release. In terms of biological role, protein L1 is also a translational repressor protein, it controls the translation of the L11 operon by binding to its mRNA. This chain is Large ribosomal subunit protein uL1, found in Streptococcus pneumoniae (strain Taiwan19F-14).